The chain runs to 531 residues: SWI/SNF-related matrix-associated actin-dependent regulator of chromatin subfamily D member 2 (531 aa).

An asymmetric dimethylarginine mark is found at R81 and R104. S203 carries the phosphoserine modification. The tract at residues 205-227 (SKAEGDTAGTTGTPGGTPAGDKV) is disordered. Residue T217 is modified to Phosphothreonine. K226 participates in a covalent cross-link: Glycyl lysine isopeptide (Lys-Gly) (interchain with G-Cter in SUMO2). The 78-residue stretch at 306-383 (HQPPQYKLDP…PMKLAGLLQH (78 aa)) folds into the SWIB/MDM2 domain.

The protein belongs to the SMARCD family. In terms of assembly, component of the multiprotein chromatin-remodeling complexes SWI/SNF: SWI/SNF-A (BAF), SWI/SNF-B (PBAF) and related complexes. The canonical complex contains a catalytic subunit (either SMARCA4/BRG1/BAF190A or SMARCA2/BRM/BAF190B), and at least SMARCE1, ACTL6A/BAF53, SMARCC1/BAF155, SMARCC2/BAF170, and SMARCB1/SNF5/BAF47. Other subunits specific to each of the complexes may also be present permitting several possible combinations developmentally and tissue specific. Component of the BAF complex, which includes at least actin (ACTB), ARID1A/BAF250A, ARID1B/BAF250B, SMARCA2/BRM, SMARCA4/BRG1, ACTL6A/BAF53, ACTL6B/BAF53B, SMARCE1/BAF57, SMARCC1/BAF155, SMARCC2/BAF170, SMARCB1/SNF5/INI1, and one or more SMARCD1/BAF60A, SMARCD2/BAF60B, or SMARCD3/BAF60C. In muscle cells, the BAF complex also contains DPF3. Component of the SWI/SNF-B (PBAF) chromatin remodeling complex, at least composed of SMARCA4/BRG1, SMARCB1/BAF47/SNF5, ACTL6A/BAF53A or ACTL6B/BAF53B, SMARCE1/BAF57, SMARCD1/BAF60A, SMARCD2/BAF60B, perhaps SMARCD3/BAF60C, SMARCC1/BAF155, SMARCC2/BAF170, PBRM1/BAF180, ARID2/BAF200 and actin (ACTB). Interacts with UNKL. Interacts with CEBPE. Post-translationally, ubiquitinated through a signaling process involving RAC1 and the RING finger protein UNKL.

It is found in the nucleus. Involved in transcriptional activation and repression of select genes by chromatin remodeling (alteration of DNA-nucleosome topology). Component of SWI/SNF chromatin remodeling complexes that carry out key enzymatic activities, changing chromatin structure by altering DNA-histone contacts within a nucleosome in an ATP-dependent manner. Critical regulator of myeloid differentiation, controlling granulocytopoiesis and the expression of genes involved in neutrophil granule formation. This chain is SWI/SNF-related matrix-associated actin-dependent regulator of chromatin subfamily D member 2 (SMARCD2), found in Bos taurus (Bovine).